The primary structure comprises 69 residues: Purkinje cell protein 4-like protein 1 (69 aa).

The segment covering 1-15 has biased composition (polar residues); the sequence is MSELNTKTSPATNQA. The disordered stretch occupies residues 1–47; that stretch reads MSELNTKTSPATNQAPGPEEKGKAGSAKKTEDEEEEIDIDLTAPETE. Thr8 is modified (phosphothreonine). Residues 18–31 are compositionally biased toward basic and acidic residues; that stretch reads PEEKGKAGSAKKTE. In terms of domain architecture, IQ spans 46–69; sequence TEKAALAIQGKFRRFQKRKKDPSS.

This sequence belongs to the PCP4 family.

The chain is Purkinje cell protein 4-like protein 1 (PCP4L1) from Bos taurus (Bovine).